The following is a 236-amino-acid chain: Ribosome maturation protein SDO1 homolog (236 aa).

Belongs to the SDO1/SBDS family. In terms of assembly, crystallized in association with 70S ribosomes.

This chain is Ribosome maturation protein SDO1 homolog, found in Thermococcus kodakarensis (strain ATCC BAA-918 / JCM 12380 / KOD1) (Pyrococcus kodakaraensis (strain KOD1)).